The following is a 930-amino-acid chain: Polypeptide N-acetylgalactosaminyltransferase 5 (930 aa).

At 1 to 12 (MNKIRKFFRGSG) the chain is on the cytoplasmic side. The chain crosses the membrane as a helical; Signal-anchor for type II membrane protein span at residues 13–35 (RVLAFIFAASVIWLLFDMAALRL). Topologically, residues 36–930 (SFSEINAGLL…KWKFEKYYEV (895 aa)) are lumenal. The disordered stretch occupies residues 190–209 (KQEAPQNYNVSSDTSKQASE). The segment covering 193 to 209 (APQNYNVSSDTSKQASE) has biased composition (polar residues). 3 N-linked (GlcNAc...) asparagine glycosylation sites follow: Asn198, Asn213, and Asn283. Ser285 is modified (phosphoserine). Residues Asn287, Asn309, Asn355, and Asn387 are each glycosylated (N-linked (GlcNAc...) asparagine). A disordered region spans residues 327 to 381 (DTKEVPNSKTQTVFPKLLGGSPHKQIPRNQSKTSSSPPALKKAVSQSKPTISGGL). Over residues 353-363 (PRNQSKTSSSP) the composition is skewed to polar residues. Intrachain disulfides connect Cys476/Cys708, Cys699/Cys779, and Cys812/Cys825. Residues 485 to 594 (LPTTSIIMCF…VGWLEPLLER (110 aa)) are catalytic subdomain A. 2 residues coordinate substrate: Asp526 and Arg555. N-linked (GlcNAc...) asparagine glycosylation is present at Asn568. Asp578 serves as a coordination point for Mn(2+). Ser579 lines the substrate pocket. Residue His580 coordinates Mn(2+). The interval 654-716 (IIRCPVMAGG…PCSRVGHIFR (63 aa)) is catalytic subdomain B. Residue Trp685 participates in substrate binding. Residue His713 coordinates Mn(2+). Arg716 and Tyr721 together coordinate substrate. Residues Asn766, Asn817, and Asn835 are each glycosylated (N-linked (GlcNAc...) asparagine). The 132-residue stretch at 794 to 925 (KAPVVRASGV…MELQQKWKFE (132 aa)) folds into the Ricin B-type lectin domain. Intrachain disulfides connect Cys848–Cys863 and Cys898–Cys913. The N-linked (GlcNAc...) asparagine glycan is linked to Asn902.

This sequence belongs to the glycosyltransferase 2 family. GalNAc-T subfamily. In terms of assembly, interacts with EXT2. Does not interact with EXT1, EXTL1 or EXTL3. Mn(2+) is required as a cofactor. In terms of tissue distribution, expressed at low level. Not expressed before E7.5 during embryogenesis. Expressed in dental mesenchyme and tongue. Accumulates in a subset of mesenchymal cells at the ventral-most portions of the 12.5 dpc maxilla and mandible underlying the dental lamina.

The protein resides in the golgi apparatus membrane. The enzyme catalyses L-seryl-[protein] + UDP-N-acetyl-alpha-D-galactosamine = a 3-O-[N-acetyl-alpha-D-galactosaminyl]-L-seryl-[protein] + UDP + H(+). It catalyses the reaction L-threonyl-[protein] + UDP-N-acetyl-alpha-D-galactosamine = a 3-O-[N-acetyl-alpha-D-galactosaminyl]-L-threonyl-[protein] + UDP + H(+). Its pathway is protein modification; protein glycosylation. Functionally, catalyzes the initial reaction in O-linked oligosaccharide biosynthesis, the transfer of an N-acetyl-D-galactosamine residue to a serine or threonine residue on the protein receptor. Has activity toward EA2 peptide substrate, but has a weak activity toward Muc2 or Muc1b substrates. This Mus musculus (Mouse) protein is Polypeptide N-acetylgalactosaminyltransferase 5 (Galnt5).